The sequence spans 61 residues: Disintegrin atroxatin (61 aa).

One can recognise a Disintegrin domain in the interval 1 to 61 (NPCCDAATCK…ADCPRKGIYG (61 aa)). Cystine bridges form between Cys3/Cys26, Cys9/Cys23, Cys17/Cys23, Cys22/Cys47, and Cys35/Cys54. The Cell attachment site motif lies at 39 to 41 (RGD).

It belongs to the venom metalloproteinase (M12B) family. P-II subfamily. P-IIa sub-subfamily. In terms of assembly, monomer (disintegrin). In terms of tissue distribution, expressed by the venom gland.

The protein resides in the secreted. Its function is as follows. Inhibits fibrinogen interaction with platelets. Acts by binding to alpha-IIb/beta-3 (ITGA2B/ITGB3) on the platelet surface and inhibits aggregation induced by ADP, thrombin, platelet-activating factor and collagen. In Crotalus atrox (Western diamondback rattlesnake), this protein is Disintegrin atroxatin.